A 272-amino-acid polypeptide reads, in one-letter code: Nuclear transcription factor Y subunit A-1 (272 aa).

2 disordered regions span residues 1–20 (MQSK…HAVQ) and 34–106 (SFGV…PALS). Polar residues-rich tracts occupy residues 46–61 (IPSN…GSES) and 82–92 (KDSQAATSSRS). A Subunit association domain (SAD) motif is present at residues 175–198 (YVNAKQYEGILRRRKARAKAELER). Residues 205–230 (KPYLHESRHKHAMRRARASGGRFAKK) constitute a DNA-binding region (NFYA/HAP2-type). Residues 206-272 (PYLHESRHKH…NETLNSSGAP (67 aa)) form a disordered region. Residues 211 to 221 (SRHKHAMRRAR) show a composition bias toward basic residues. Positions 229–247 (KKSEVEAGEDAGGRDRERG) are enriched in basic and acidic residues. Polar residues-rich tracts occupy residues 248–257 (SATNSSGSEQ) and 263–272 (NETLNSSGAP).

The protein belongs to the NFYA/HAP2 subunit family. In terms of assembly, heterotrimeric transcription factor composed of three components, NF-YA, NF-YB and NF-YC. NF-YB and NF-YC must interact and dimerize for NF-YA association and DNA binding. In terms of tissue distribution, ubiquitous.

The protein localises to the nucleus. Its function is as follows. Stimulates the transcription of various genes by recognizing and binding to a CCAAT motif in promoters. The chain is Nuclear transcription factor Y subunit A-1 (NFYA1) from Arabidopsis thaliana (Mouse-ear cress).